We begin with the raw amino-acid sequence, 119 residues long: Protein TusC (119 aa).

Belongs to the DsrF/TusC family. As to quaternary structure, heterohexamer, formed by a dimer of trimers. The hexameric TusBCD complex contains 2 copies each of TusB, TusC and TusD. The TusBCD complex interacts with TusE.

The protein resides in the cytoplasm. Part of a sulfur-relay system required for 2-thiolation of 5-methylaminomethyl-2-thiouridine (mnm(5)s(2)U) at tRNA wobble positions. The polypeptide is Protein TusC (Klebsiella pneumoniae (strain 342)).